A 615-amino-acid chain; its full sequence is Leucine aminopeptidase 2-1 (615 aa).

Substrate contacts are provided by residues Gln-137–Gln-139 and Pro-261–Glu-266. His-290 contributes to the Zn(2+) binding site. Glu-291 (proton acceptor) is an active-site residue. Positions 294 and 313 each coordinate Zn(2+). The active-site Proton donor is Tyr-380.

The protein belongs to the peptidase M1 family. Zn(2+) serves as cofactor.

The protein resides in the cytoplasm. Its subcellular location is the nucleus. It carries out the reaction an epoxide + H2O = an ethanediol. In terms of biological role, aminopeptidase that preferentially cleaves di- and tripeptides. Also has low epoxide hydrolase activity (in vitro). Can hydrolyze the epoxide leukotriene LTA(4) but it forms preferentially 5,6-dihydroxy-7,9,11,14-eicosatetraenoic acid rather than the cytokine leukotriene B(4) as the product compared to the homologous mammalian enzyme (in vitro). In Meyerozyma guilliermondii (strain ATCC 6260 / CBS 566 / DSM 6381 / JCM 1539 / NBRC 10279 / NRRL Y-324) (Yeast), this protein is Leucine aminopeptidase 2-1.